A 31-amino-acid chain; its full sequence is MLTITSYFGFLLAALTITPALFISLNKIRLI.

A helical transmembrane segment spans residues 3–23 (TITSYFGFLLAALTITPALFI).

This sequence belongs to the PetL family. As to quaternary structure, the 4 large subunits of the cytochrome b6-f complex are cytochrome b6, subunit IV (17 kDa polypeptide, PetD), cytochrome f and the Rieske protein, while the 4 small subunits are PetG, PetL, PetM and PetN. The complex functions as a dimer.

The protein resides in the plastid. Its subcellular location is the chloroplast thylakoid membrane. Component of the cytochrome b6-f complex, which mediates electron transfer between photosystem II (PSII) and photosystem I (PSI), cyclic electron flow around PSI, and state transitions. PetL is important for photoautotrophic growth as well as for electron transfer efficiency and stability of the cytochrome b6-f complex. In Zea mays (Maize), this protein is Cytochrome b6-f complex subunit 6.